A 684-amino-acid polypeptide reads, in one-letter code: Agnestins biosynthesis cluster transcription factor AgnL11 (684 aa).

Positions 25 to 51 form a DNA-binding region, zn(2)-C6 fungal-type; it reads CHFCRTKKLKCDRRFPCSNCRARRLSC. A coiled-coil region spans residues 76–103; sequence NEELSENINELKARLQRLEELISVNAEE. The disordered stretch occupies residues 601–644; the sequence is KGSASARKDKNPIHGDTDRATPPGSSNLPQHDKSSSSSPAPPVW. The segment covering 606–619 has biased composition (basic and acidic residues); it reads ARKDKNPIHGDTDR.

It is found in the nucleus. Transcription factor that regulates the expression of the gene cluster that mediates the biosynthesis of agnestins, dihydroxy-xanthone metabolites. The chain is Agnestins biosynthesis cluster transcription factor AgnL11 from Paecilomyces divaricatus (Penicillium divaricatum).